Consider the following 192-residue polypeptide: Ion-translocating oxidoreductase complex subunit B (192 aa).

The hydrophobic stretch occupies residues 1 to 26 (MSTIWIAIAALSALALAFGLVLGYAS). The 4Fe-4S domain maps to 32 to 91 (ENDPIVEEVEAMLPQSQCGQCGYPGCRPYAEAVALNGENINKCGPGGEAMMLKLAEKLNV). Positions 49, 52, 57, 74, 117, 120, 123, 127, 147, 150, 153, and 157 each coordinate [4Fe-4S] cluster. 4Fe-4S ferredoxin-type domains follow at residues 108–137 (QVAW…GSTK) and 138–167 (AVHT…LRPI).

This sequence belongs to the 4Fe4S bacterial-type ferredoxin family. RnfB subfamily. In terms of assembly, the complex is composed of six subunits: RnfA, RnfB, RnfC, RnfD, RnfE and RnfG. [4Fe-4S] cluster serves as cofactor.

It is found in the cell inner membrane. Part of a membrane-bound complex that couples electron transfer with translocation of ions across the membrane. The sequence is that of Ion-translocating oxidoreductase complex subunit B from Pectobacterium carotovorum subsp. carotovorum (strain PC1).